A 179-amino-acid chain; its full sequence is NADH-quinone oxidoreductase subunit B (179 aa).

Residues cysteine 35, cysteine 36, cysteine 100, and cysteine 129 each contribute to the [4Fe-4S] cluster site.

This sequence belongs to the complex I 20 kDa subunit family. As to quaternary structure, NDH-1 is composed of 14 different subunits. Subunits NuoB, C, D, E, F, and G constitute the peripheral sector of the complex. [4Fe-4S] cluster is required as a cofactor.

Its subcellular location is the cell inner membrane. The catalysed reaction is a quinone + NADH + 5 H(+)(in) = a quinol + NAD(+) + 4 H(+)(out). Its function is as follows. NDH-1 shuttles electrons from NADH, via FMN and iron-sulfur (Fe-S) centers, to quinones in the respiratory chain. Couples the redox reaction to proton translocation (for every two electrons transferred, four hydrogen ions are translocated across the cytoplasmic membrane), and thus conserves the redox energy in a proton gradient. The sequence is that of NADH-quinone oxidoreductase subunit B from Aquifex aeolicus (strain VF5).